The chain runs to 145 residues: uncharacterized protein (145 aa).

This sequence belongs to the methyltransferase superfamily.

In terms of biological role, probable methyltransferase. This is an uncharacterized protein from Schizosaccharomyces pombe (strain 972 / ATCC 24843) (Fission yeast).